A 430-amino-acid chain; its full sequence is Serine--tRNA ligase (430 aa).

L-serine is bound at residue 238-240 (TAE). 269 to 271 (RRE) contributes to the ATP binding site. E292 lines the L-serine pocket. Residue 356–359 (EISS) coordinates ATP. S392 lines the L-serine pocket.

The protein belongs to the class-II aminoacyl-tRNA synthetase family. Type-1 seryl-tRNA synthetase subfamily. As to quaternary structure, homodimer. The tRNA molecule binds across the dimer.

Its subcellular location is the cytoplasm. It carries out the reaction tRNA(Ser) + L-serine + ATP = L-seryl-tRNA(Ser) + AMP + diphosphate + H(+). The enzyme catalyses tRNA(Sec) + L-serine + ATP = L-seryl-tRNA(Sec) + AMP + diphosphate + H(+). It participates in aminoacyl-tRNA biosynthesis; selenocysteinyl-tRNA(Sec) biosynthesis; L-seryl-tRNA(Sec) from L-serine and tRNA(Sec): step 1/1. Its function is as follows. Catalyzes the attachment of serine to tRNA(Ser). Is also able to aminoacylate tRNA(Sec) with serine, to form the misacylated tRNA L-seryl-tRNA(Sec), which will be further converted into selenocysteinyl-tRNA(Sec). This Synechocystis sp. (strain ATCC 27184 / PCC 6803 / Kazusa) protein is Serine--tRNA ligase.